Consider the following 117-residue polypeptide: Transcription elongation factor A protein-like 8 (117 aa).

A disordered region spans residues 1 to 82 (MQKSCDENEG…EEVIRGVDEL (82 aa)). Residues 41 to 82 (NVREETEGSHRGEPAEPSPEPKEDTPARHLNPEEVIRGVDEL) are compositionally biased toward basic and acidic residues. The stretch at 73-100 (EEVIRGVDELERLREEIRRVRNKFVLMH) forms a coiled coil.

This sequence belongs to the TFS-II family. TFA subfamily.

It localises to the nucleus. May be involved in transcriptional regulation. The polypeptide is Transcription elongation factor A protein-like 8 (Tceal8) (Mus musculus (Mouse)).